The following is a 323-amino-acid chain: Aspartate carbamoyltransferase catalytic subunit (323 aa).

Carbamoyl phosphate-binding residues include Arg-61 and Thr-62. Residue Lys-89 coordinates L-aspartate. The carbamoyl phosphate site is built by Arg-111, His-144, and Gln-147. Positions 184 and 238 each coordinate L-aspartate. Carbamoyl phosphate is bound by residues Gly-279 and Pro-280.

This sequence belongs to the aspartate/ornithine carbamoyltransferase superfamily. ATCase family. In terms of assembly, heterododecamer (2C3:3R2) of six catalytic PyrB chains organized as two trimers (C3), and six regulatory PyrI chains organized as three dimers (R2).

The catalysed reaction is carbamoyl phosphate + L-aspartate = N-carbamoyl-L-aspartate + phosphate + H(+). It functions in the pathway pyrimidine metabolism; UMP biosynthesis via de novo pathway; (S)-dihydroorotate from bicarbonate: step 2/3. Its function is as follows. Catalyzes the condensation of carbamoyl phosphate and aspartate to form carbamoyl aspartate and inorganic phosphate, the committed step in the de novo pyrimidine nucleotide biosynthesis pathway. This Acaryochloris marina (strain MBIC 11017) protein is Aspartate carbamoyltransferase catalytic subunit.